The chain runs to 70 residues: Large ribosomal subunit protein bL31 (70 aa).

Zn(2+) is bound by residues Cys-16, Cys-18, Cys-37, and Cys-40. Residues 48 to 70 (QRQASSGGRVDKFNKRFGALGSK) are disordered.

It belongs to the bacterial ribosomal protein bL31 family. Type A subfamily. As to quaternary structure, part of the 50S ribosomal subunit. Zn(2+) serves as cofactor.

Functionally, binds the 23S rRNA. In Photobacterium profundum (strain SS9), this protein is Large ribosomal subunit protein bL31.